Consider the following 89-residue polypeptide: MAENSVFVGNKPVMNYVLAVLTQFNSGATEVSIKARGRAISRAVDVAEIVRKRFLPDVDVKDIKISTEQIDSEQGTANVSAIEIILAKK.

This sequence belongs to the histone-like Alba family.

It is found in the cytoplasm. Its subcellular location is the chromosome. Functionally, binds double-stranded DNA tightly but without sequence specificity. Involved in DNA compaction. This Archaeoglobus fulgidus (strain ATCC 49558 / DSM 4304 / JCM 9628 / NBRC 100126 / VC-16) protein is DNA/RNA-binding protein Alba 1.